We begin with the raw amino-acid sequence, 536 residues long: Phosphoenolpyruvate carboxykinase (ATP) (536 aa).

Substrate-binding residues include arginine 61, tyrosine 195, and lysine 201. ATP-binding positions include lysine 201, histidine 220, and 236-244 (GLSGTGKTT). Mn(2+) contacts are provided by lysine 201 and histidine 220. Aspartate 257 contacts Mn(2+). Residues glutamate 285, arginine 322, and threonine 447 each coordinate ATP. Arginine 322 serves as a coordination point for substrate.

The protein belongs to the phosphoenolpyruvate carboxykinase (ATP) family. Mn(2+) serves as cofactor.

Its subcellular location is the cytoplasm. It catalyses the reaction oxaloacetate + ATP = phosphoenolpyruvate + ADP + CO2. It functions in the pathway carbohydrate biosynthesis; gluconeogenesis. In terms of biological role, involved in the gluconeogenesis. Catalyzes the conversion of oxaloacetate (OAA) to phosphoenolpyruvate (PEP) through direct phosphoryl transfer between the nucleoside triphosphate and OAA. The chain is Phosphoenolpyruvate carboxykinase (ATP) from Allorhizobium ampelinum (strain ATCC BAA-846 / DSM 112012 / S4) (Agrobacterium vitis (strain S4)).